Here is a 248-residue protein sequence, read N- to C-terminus: Tryptophan synthase alpha chain (248 aa).

Catalysis depends on proton acceptor residues E36 and D47.

This sequence belongs to the TrpA family. As to quaternary structure, tetramer of two alpha and two beta chains.

It carries out the reaction (1S,2R)-1-C-(indol-3-yl)glycerol 3-phosphate + L-serine = D-glyceraldehyde 3-phosphate + L-tryptophan + H2O. It functions in the pathway amino-acid biosynthesis; L-tryptophan biosynthesis; L-tryptophan from chorismate: step 5/5. The alpha subunit is responsible for the aldol cleavage of indoleglycerol phosphate to indole and glyceraldehyde 3-phosphate. This is Tryptophan synthase alpha chain from Archaeoglobus fulgidus (strain ATCC 49558 / DSM 4304 / JCM 9628 / NBRC 100126 / VC-16).